We begin with the raw amino-acid sequence, 872 residues long: Coatomer subunit gamma-2 (872 aa).

6 HEAT repeats span residues 64–101 (MEAT…ISED), 283–320 (RELA…KHPS), 321–355 (AVTA…GSES), 356–392 (SVDR…KYPR), 395–430 (SVMM…ENPD), and 467–504 (PTPS…QNEP).

The protein belongs to the COPG family. As to quaternary structure, oligomeric complex.

It is found in the cytoplasm. It localises to the golgi apparatus membrane. The protein resides in the cytoplasmic vesicle. Its subcellular location is the COPI-coated vesicle membrane. The coatomer is a cytosolic protein complex that binds to dilysine motifs and reversibly associates with Golgi non-clathrin-coated vesicles, which further mediate biosynthetic protein transport from the ER, via the Golgi up to the trans Golgi network. Coatomer complex is required for budding from Golgi membranes, and is essential for the retrograde Golgi-to-ER transport of dilysine-tagged proteins. The chain is Coatomer subunit gamma-2 (copg2) from Xenopus tropicalis (Western clawed frog).